Reading from the N-terminus, the 184-residue chain is Bifunctional protein PyrR (184 aa).

A PRPP-binding motif is present at residues 98–110 (VVLVDDVLYTGRT).

Belongs to the purine/pyrimidine phosphoribosyltransferase family. PyrR subfamily.

It carries out the reaction UMP + diphosphate = 5-phospho-alpha-D-ribose 1-diphosphate + uracil. Its function is as follows. Regulates the transcription of the pyrimidine nucleotide (pyr) operon in response to exogenous pyrimidines. In terms of biological role, also displays a weak uracil phosphoribosyltransferase activity which is not physiologically significant. In Roseiflexus castenholzii (strain DSM 13941 / HLO8), this protein is Bifunctional protein PyrR.